Reading from the N-terminus, the 268-residue chain is Small ribosomal subunit protein uS10m (268 aa).

A mitochondrion-targeting transit peptide spans 1–64; that stretch reads MIIRPVVRSL…RITTTTEAPK (64 aa).

Belongs to the universal ribosomal protein uS10 family. As to quaternary structure, component of the mitochondrial small ribosomal subunit (mt-SSU). Mature N.crassa 74S mitochondrial ribosomes consist of a small (37S) and a large (54S) subunit. The 37S small subunit contains a 16S ribosomal RNA (16S mt-rRNA) and 32 different proteins. The 54S large subunit contains a 23S rRNA (23S mt-rRNA) and 42 different proteins.

It is found in the mitochondrion. Functionally, component of the mitochondrial ribosome (mitoribosome), a dedicated translation machinery responsible for the synthesis of mitochondrial genome-encoded proteins, including at least some of the essential transmembrane subunits of the mitochondrial respiratory chain. The mitoribosomes are attached to the mitochondrial inner membrane and translation products are cotranslationally integrated into the membrane. The sequence is that of Small ribosomal subunit protein uS10m (mrp-10) from Neurospora crassa (strain ATCC 24698 / 74-OR23-1A / CBS 708.71 / DSM 1257 / FGSC 987).